A 562-amino-acid polypeptide reads, in one-letter code: Phosphomethylpyrimidine synthase (562 aa).

Substrate is bound by residues asparagine 179, methionine 208, tyrosine 237, histidine 273, serine 293–glycine 295, aspartate 334–arginine 337, and glutamate 373. Position 377 (histidine 377) interacts with Zn(2+). Tyrosine 400 is a binding site for substrate. A Zn(2+)-binding site is contributed by histidine 441. Residues cysteine 521, cysteine 524, and cysteine 529 each coordinate [4Fe-4S] cluster.

It belongs to the ThiC family. It depends on [4Fe-4S] cluster as a cofactor.

The catalysed reaction is 5-amino-1-(5-phospho-beta-D-ribosyl)imidazole + S-adenosyl-L-methionine = 4-amino-2-methyl-5-(phosphooxymethyl)pyrimidine + CO + 5'-deoxyadenosine + formate + L-methionine + 3 H(+). The protein operates within cofactor biosynthesis; thiamine diphosphate biosynthesis. Its function is as follows. Catalyzes the synthesis of the hydroxymethylpyrimidine phosphate (HMP-P) moiety of thiamine from aminoimidazole ribotide (AIR) in a radical S-adenosyl-L-methionine (SAM)-dependent reaction. This Geobacillus kaustophilus (strain HTA426) protein is Phosphomethylpyrimidine synthase.